We begin with the raw amino-acid sequence, 343 residues long: RNA-binding protein 43 (343 aa).

Positions 15 to 90 (RTVVVSGLPV…PRLTVSHFSE (76 aa)) constitute an RRM domain.

The protein is RNA-binding protein 43 (Rbm43) of Mus musculus (Mouse).